We begin with the raw amino-acid sequence, 1385 residues long: PsbD mRNA maturation factor Nac2, chloroplastic (1385 aa).

Residues 1–45 (MGALPCPAHIEHHQGLSSFGTRRVLRQSVACGAHRSRRRSLWAGA) constitute a chloroplast transit peptide. Over residues 132–152 (GPHGAASATGAGSHSSSAGAP) the composition is skewed to low complexity. 7 disordered regions span residues 132-157 (GPHG…PTPR), 263-282 (AVAA…RSSA), 304-360 (TSSR…AAGP), 387-502 (RQQP…GHGQ), 546-568 (NGAG…SGTS), 726-756 (HADS…VAAA), and 840-899 (ARRA…APSA). A compositionally biased stretch (basic and acidic residues) spans 271–281 (QPHEHQQERSS). Over residues 304 to 313 (TSSRRGGRSS) the composition is skewed to low complexity. The span at 403–412 (NGSGKSGSGG) shows a compositional bias: gly residues. 4 stretches are compositionally biased toward low complexity: residues 448 to 464 (APAA…RPAA), 554 to 568 (ASAS…SGTS), 729 to 744 (SSSS…SSSG), and 854 to 893 (ASTT…AAAG). TPR repeat units follow at residues 851-884 (RRGA…DPAS), 951-984 (GAVM…CPAD), 985-1018 (VALY…DRTD), 1019-1052 (KQLF…HPLN), 1053-1086 (TKII…DPLS), 1091-1124 (VHNR…HPNS), 1125-1158 (AALL…AGAF), 1160-1193 (AAVM…KQLN), and 1205-1238 (AWRA…APAV). 2 disordered regions span residues 1237 to 1257 (AVRG…GRRP) and 1333 to 1385 (IQDP…ADDM). The segment covering 1356–1365 (QDADYYEEPE) has biased composition (acidic residues). Residues 1374-1385 (AVRRPMPDADDM) are compositionally biased toward basic and acidic residues.

As to quaternary structure, part of 2 complexes of about 600 and less than 2000 kDa, both of which also contain non-polysomal RNA.

It localises to the plastid. The protein localises to the chloroplast stroma. In terms of biological role, involved, directly or indirectly, in the processing of the chloroplast encoded psbD mRNA to its mature form, acting via the 5'-UTR of the psbD mRNA. The last 588 amino acids of the protein are sufficient to confer stability on the transcript in vivo. In Chlamydomonas reinhardtii (Chlamydomonas smithii), this protein is PsbD mRNA maturation factor Nac2, chloroplastic (NAC2).